A 256-amino-acid chain; its full sequence is Imidazole glycerol phosphate synthase subunit HisF (256 aa).

Residues aspartate 12 and aspartate 131 contribute to the active site.

It belongs to the HisA/HisF family. Heterodimer of HisH and HisF.

The protein resides in the cytoplasm. The catalysed reaction is 5-[(5-phospho-1-deoxy-D-ribulos-1-ylimino)methylamino]-1-(5-phospho-beta-D-ribosyl)imidazole-4-carboxamide + L-glutamine = D-erythro-1-(imidazol-4-yl)glycerol 3-phosphate + 5-amino-1-(5-phospho-beta-D-ribosyl)imidazole-4-carboxamide + L-glutamate + H(+). The protein operates within amino-acid biosynthesis; L-histidine biosynthesis; L-histidine from 5-phospho-alpha-D-ribose 1-diphosphate: step 5/9. In terms of biological role, IGPS catalyzes the conversion of PRFAR and glutamine to IGP, AICAR and glutamate. The HisF subunit catalyzes the cyclization activity that produces IGP and AICAR from PRFAR using the ammonia provided by the HisH subunit. This is Imidazole glycerol phosphate synthase subunit HisF from Pseudomonas syringae pv. syringae (strain B728a).